The following is an 899-amino-acid chain: Translation initiation factor IF-2 (899 aa).

3 disordered regions span residues 116–135, 170–189, and 262–306; these read AKAR…ARLQ, RGGG…EQKK, and DREI…ANKH. Residues 399–568 form the tr-type G domain; it reads TRPPVVTIMG…LIQSELMELK (170 aa). The segment at 408–415 is G1; it reads GHVDHGKT. Position 408 to 415 (408 to 415) interacts with GTP; the sequence is GHVDHGKT. Positions 433–437 are G2; sequence GITQH. The segment at 454–457 is G3; it reads DTPG. GTP-binding positions include 454–458 and 508–511; these read DTPGH and NKMD. The tract at residues 508–511 is G4; the sequence is NKMD. Residues 544–546 are G5; that stretch reads SAH.

It belongs to the TRAFAC class translation factor GTPase superfamily. Classic translation factor GTPase family. IF-2 subfamily.

Its subcellular location is the cytoplasm. One of the essential components for the initiation of protein synthesis. Protects formylmethionyl-tRNA from spontaneous hydrolysis and promotes its binding to the 30S ribosomal subunits. Also involved in the hydrolysis of GTP during the formation of the 70S ribosomal complex. The sequence is that of Translation initiation factor IF-2 from Acinetobacter baumannii (strain AB307-0294).